A 312-amino-acid chain; its full sequence is Olfactory receptor 10K2 (312 aa).

The Extracellular segment spans residues 1 to 25 (MERVNETVVREVIFLGFSSLARLQQ). N-linked (GlcNAc...) asparagine glycosylation occurs at N5. The chain crosses the membrane as a helical span at residues 26-46 (LLFVIFLLLYLFTLGTNAIII). The Cytoplasmic portion of the chain corresponds to 47–54 (STIVLDRA). Residues 55–75 (LHIPMYFFLAILSCSEICYTF) traverse the membrane as a helical segment. The Extracellular segment spans residues 76–99 (IIVPKMLVDLLSQKKTISFLGCAI). The helical transmembrane segment at 100-120 (QMFSFLFLGCSHSFLLAVMGY) threads the bilayer. The Cytoplasmic segment spans residues 121-139 (DRYIAICNPLRYSVLMGHG). The chain crosses the membrane as a helical span at residues 140-160 (VCMGLVAAACACGFTVAQIIT). Topologically, residues 161 to 197 (SLVFHLPFYSSNQLHHFFCDIAPVLKLASHHNHFSQI) are extracellular. A helical transmembrane segment spans residues 198-217 (VIFMLCTLVLAIPLLLILVS). Topologically, residues 218 to 237 (YVHILSAILQFPSTLGRCKA) are cytoplasmic. Residues 238 to 258 (FSTCVSHLIIVTVHYGCASFI) form a helical membrane-spanning segment. The Extracellular portion of the chain corresponds to 259–271 (YLRPQSNYSSSQD). N-linked (GlcNAc...) asparagine glycosylation is present at N265. The chain crosses the membrane as a helical span at residues 272-292 (ALISVSYTIITPLFNPMIYSL). Residues 293–312 (RNKEFKSALCKIVRRTISLL) are Cytoplasmic-facing.

This sequence belongs to the G-protein coupled receptor 1 family.

The protein resides in the cell membrane. Odorant receptor. The sequence is that of Olfactory receptor 10K2 (OR10K2) from Homo sapiens (Human).